The primary structure comprises 522 residues: N-acetylgalactosamine-6-sulfatase (522 aa).

An N-terminal signal peptide occupies residues 1–25 (MAPVAAATGWRLLLVLSAAGLGAAG). Residues 27–379 (PQPPNILLLL…PAMLGGQLTD (353 aa)) form a catalytic domain region. Ca(2+) contacts are provided by aspartate 38, aspartate 39, and cysteine 78. The active-site Nucleophile is cysteine 78. Residue cysteine 78 is modified to 3-oxoalanine (Cys). Histidine 141 is a catalytic residue. Asparagine 203 is a glycosylation site (N-linked (GlcNAc...) asparagine). Positions 288 and 289 each coordinate Ca(2+). An intrachain disulfide couples cysteine 308 to cysteine 419. Asparagine 423 carries N-linked (GlcNAc...) asparagine glycosylation. 2 disulfides stabilise this stretch: cysteine 489/cysteine 518 and cysteine 501/cysteine 507.

It belongs to the sulfatase family. In terms of assembly, homodimer. It depends on Ca(2+) as a cofactor. Post-translationally, the conversion to 3-oxoalanine (also known as C-formylglycine, FGly), of a serine or cysteine residue in prokaryotes and of a cysteine residue in eukaryotes, is critical for catalytic activity.

The protein localises to the lysosome. It carries out the reaction Hydrolysis of the 6-sulfate groups of the N-acetyl-D-galactosamine 6-sulfate units of chondroitin sulfate and of the D-galactose 6-sulfate units of keratan sulfate.. This is N-acetylgalactosamine-6-sulfatase (GALNS) from Canis lupus familiaris (Dog).